Reading from the N-terminus, the 496-residue chain is UDP-glycosyltransferase 73C4 (496 aa).

UDP-alpha-D-glucose-binding positions include Ser-297, 357–359, 374–382, and 396–399; these read SPQ, HCGWNSTLE, and FGDQ. The interval 450 to 475 is disordered; it reads SDDAKERRRRVKELGESAHKAVEEGG. Basic and acidic residues predominate over residues 451–472; sequence DDAKERRRRVKELGESAHKAVE.

Belongs to the UDP-glycosyltransferase family.

The protein is UDP-glycosyltransferase 73C4 (UGT73C4) of Arabidopsis thaliana (Mouse-ear cress).